Reading from the N-terminus, the 244-residue chain is Nodulation protein G (244 aa).

11–35 (VTGASGAIGGAIARVLHAQGAIVGL) is a binding site for NAD(+). Serine 139 is a binding site for substrate. Tyrosine 152 functions as the Proton acceptor in the catalytic mechanism.

This sequence belongs to the short-chain dehydrogenases/reductases (SDR) family.

Proposed to modify Nod factor fatty acyl chain. In Rhizobium meliloti (Ensifer meliloti), this protein is Nodulation protein G (nodG).